Consider the following 800-residue polypeptide: MKARRNKKQVPSFRKLIKTSKVKLEYKLKNKQFKQQSTIKKYRKEQRKLRQAVKDAVSKKPFPLEDPKSKRPVKGMEREEEDEEDQALPLDMMDDDDLQLMKDLGQKASFLTRDLSSSEPVHIKKRKHESVIDKYEKMPRTLQTAPEKELIHLLPIKDKSGIIPQTREKPVTDIQQEEEDEEELEVEEEVVENPIQELTIEEHLIVRKKKLQEKKIQIATLASSILSDPESNIKKLKELRSMLMEQDPDVAVTVRKLVIISLMELFKDITPSYKIRPLTEAEKSTKIRKETQKLREFEEGLVSQYKFYLENLEQIVKDWKQRKLKKSNVVSLKAYKGLAEVAVKSLCELLVALPHFNFHNNIIVLIVPLMNDGSKLVSEMCCEAVKKLFKQDKLGQASLGVIKVISGFVKGRNYEVRPEMLKTFLCLRIKEVEVKKDTEDINKPKKFMTFKEKRKTLSRMQRKWKKAEEKLERELREAEASESTERKLKLHTETLNIVFVTYFRILKKAQRSPLLPAVLEGLAKFAHLINVEFFDDLLVVLHTLIESGDLSYQESLHCVQTAFHILSGQGDVLNIDPMKFYTHLYKTLFKLHAGATNDGIEIVLHCLDVMLSKRRKQVSHQRALAFIKRLCTLALQVLPNSSIGLLATTRILMHTFPRTDLLLDNESQGSGVFLPELEEPEYCNAQNTALWELHALRRHYHPVVQRFAVHLLAGAPSEGSEALKPELSRRSAVELFEAYSMAAMTFNPPVEPSNSKKKDKLLQGDSFLNEDLNQLIKRYCNEVTTEIPLDFTKCLKTSVQ.

The disordered stretch occupies residues 37-90 (STIKKYRKEQRKLRQAVKDAVSKKPFPLEDPKSKRPVKGMEREEEDEEDQALPL). The span at 40–51 (KKYRKEQRKLRQ) shows a compositional bias: basic residues. Over residues 52–77 (AVKDAVSKKPFPLEDPKSKRPVKGME) the composition is skewed to basic and acidic residues. Residues 78–90 (REEEDEEDQALPL) show a composition bias toward acidic residues. Residue K333 forms a Glycyl lysine isopeptide (Lys-Gly) (interchain with G-Cter in SUMO2) linkage. The stretch at 450–489 (FKEKRKTLSRMQRKWKKAEEKLERELREAEASESTERKLK) forms a coiled coil.

It belongs to the CBF/MAK21 family.

It localises to the nucleus. The protein resides in the nucleolus. The polypeptide is Nucleolar complex protein 3 homolog (NOC3L) (Cricetulus griseus (Chinese hamster)).